Reading from the N-terminus, the 265-residue chain is MLMQSIYLSKIREQNPLIHNITNIVAANFSANGLLALGASPLMSANVEEMQEVPKISQALVINIGTLIGKDREAMLQAGKTANEVGIPVVLDPVGVGATSYRRETIRELLAEVKFALIRGNAGELAAIAGETWQAKGVDAGQGEVDLKAVAEKVAQRYGCTVLISGAVDIVSDGTQTATVHNGTSLFPKVTASGCLLSAVCAAFLAVSEGNYFSATLEACVAYTIAGECAAQGLTTQVGQFQIRLLDELAALSPETIGQRGRINE.

Residue M43 coordinates substrate. 2 residues coordinate ATP: R119 and S165. A192 lines the substrate pocket.

It belongs to the Thz kinase family. It depends on Mg(2+) as a cofactor.

The enzyme catalyses 5-(2-hydroxyethyl)-4-methylthiazole + ATP = 4-methyl-5-(2-phosphooxyethyl)-thiazole + ADP + H(+). The protein operates within cofactor biosynthesis; thiamine diphosphate biosynthesis; 4-methyl-5-(2-phosphoethyl)-thiazole from 5-(2-hydroxyethyl)-4-methylthiazole: step 1/1. In terms of biological role, catalyzes the phosphorylation of the hydroxyl group of 4-methyl-5-beta-hydroxyethylthiazole (THZ). The sequence is that of Hydroxyethylthiazole kinase from Haemophilus influenzae (strain ATCC 51907 / DSM 11121 / KW20 / Rd).